The following is a 301-amino-acid chain: Ornithine carbamoyltransferase (301 aa).

Carbamoyl phosphate contacts are provided by residues 47–50 (STRT), Q74, R98, and 125–128 (HPCQ). Residues N156, D220, and 224 to 225 (SM) contribute to the L-ornithine site. Carbamoyl phosphate-binding positions include 260-261 (CL) and R288.

The protein belongs to the aspartate/ornithine carbamoyltransferase superfamily. OTCase family.

Its subcellular location is the cytoplasm. It catalyses the reaction carbamoyl phosphate + L-ornithine = L-citrulline + phosphate + H(+). It participates in amino-acid biosynthesis; L-arginine biosynthesis; L-arginine from L-ornithine and carbamoyl phosphate: step 1/3. In terms of biological role, reversibly catalyzes the transfer of the carbamoyl group from carbamoyl phosphate (CP) to the N(epsilon) atom of ornithine (ORN) to produce L-citrulline. This is Ornithine carbamoyltransferase from Methanobrevibacter smithii (strain ATCC 35061 / DSM 861 / OCM 144 / PS).